Here is a 402-residue protein sequence, read N- to C-terminus: mRNA cap guanine-N(7) methyltransferase (402 aa).

The segment covering 1–11 has biased composition (basic and acidic residues); the sequence is MDHVLNPEEKV. The segment at 1–75 is disordered; that stretch reads MDHVLNPEEK…PRLEEGHGSL (75 aa). Residues 35–50 are compositionally biased toward polar residues; the sequence is PKLSASEKSLPGNTKS. Basic and acidic residues predominate over residues 55 to 72; sequence KAAEPDSPPKRPRLEEGH. The mRNA cap 0 methyltransferase domain maps to 94-401; that stretch reads SRIFHLRNFN…IYLLFAFEKQ (308 aa). 103-104 lines the mRNA pocket; the sequence is NN. S-adenosyl-L-methionine contacts are provided by Lys-107, Gly-131, Asp-153, Asp-187, Gln-210, and Tyr-215.

This sequence belongs to the class I-like SAM-binding methyltransferase superfamily. mRNA cap 0 methyltransferase family.

The protein resides in the nucleus. It carries out the reaction a 5'-end (5'-triphosphoguanosine)-ribonucleoside in mRNA + S-adenosyl-L-methionine = a 5'-end (N(7)-methyl 5'-triphosphoguanosine)-ribonucleoside in mRNA + S-adenosyl-L-homocysteine. Functionally, catalytic subunit of the mRNA-capping methyltransferase RNMT:RAMAC complex that methylates the N7 position of the added guanosine to the 5'-cap structure of mRNAs. Binds RNA containing 5'-terminal GpppC. The sequence is that of mRNA cap guanine-N(7) methyltransferase (rnmt) from Xenopus laevis (African clawed frog).